Reading from the N-terminus, the 344-residue chain is Palmitoyltransferase ZDHHC4 (344 aa).

Residues 1 to 2 (MD) are Lumenal-facing. The helical transmembrane segment at 3–23 (FLVLFLFYLASVLMGLVLICV) threads the bilayer. Residues 24–67 (CSKTHSLKGLARGGAQIFSCIIPECLQRAVHGLLHYLFHTRNHT) lie on the Cytoplasmic side of the membrane. The chain crosses the membrane as a helical span at residues 68 to 88 (FIVLHLVLQGMVYTEYTWEVF). At 89–99 (GYCQELELSLH) the chain is on the lumenal side. Residues 100-120 (YLLLPYLLLGVNLFFFTLTCG) traverse the membrane as a helical segment. The Cytoplasmic segment spans residues 121–192 (TNPGIITKAN…NNCIGAWNIR (72 aa)). One can recognise a DHHC domain in the interval 149–199 (VRCSTCDLRKPARSKHCSVCNWCVHRFDHHCVWVNNCIGAWNIRYFLIYVL). C179 (S-palmitoyl cysteine intermediate) is an active-site residue. A helical transmembrane segment spans residues 193 to 213 (YFLIYVLTLTASAATVAIVST). The Lumenal portion of the chain corresponds to 214–255 (TFLVHLVVMSDLYQETYIDDLGHLHVMDTVFLIQYLFLTFPR). Residues 256-276 (IVFMLGFVVVLSFLLGGYLLF) traverse the membrane as a helical segment. Topologically, residues 277–344 (VLYLAATNQT…FPCHERKKQE (68 aa)) are cytoplasmic. Residues 341–344 (KKQE) carry the Di-lysine motif motif.

It belongs to the DHHC palmitoyltransferase family. As to quaternary structure, interacts with CPT1A.

It is found in the endoplasmic reticulum membrane. The protein resides in the golgi apparatus membrane. The protein localises to the cell membrane. The catalysed reaction is L-cysteinyl-[protein] + hexadecanoyl-CoA = S-hexadecanoyl-L-cysteinyl-[protein] + CoA. In terms of biological role, palmitoyltransferase that catalyzes the addition of palmitate onto protein substrates including the D(2) dopamine receptor DRD2, GSK3B or MAVS. Mediates GSK3B palmitoylation to prevent its AKT1-mediated phosphorylation leading to activation of the STAT3 signaling pathway. Also catalyzes MAVS palmitoylation which promotes its stabilization and activation by inhibiting 'Lys-48'- but facilitating 'Lys-63'-linked ubiquitination. The protein is Palmitoyltransferase ZDHHC4 of Homo sapiens (Human).